The following is a 382-amino-acid chain: Draxin-A (382 aa).

An N-terminal signal peptide occupies residues 1–22 (MMSSSWCLPLALLFSTLAVSHS). Disordered stretches follow at residues 28–213 (THAK…PPSP), 233–252 (LPTL…GKMQ), and 275–297 (VDAW…SGNV). Residues 73–82 (RGAKASSGAG) are compositionally biased toward low complexity. Positions 139 to 149 (GPRKGRGQGHG) are enriched in basic residues. The segment covering 190–201 (SVSSAAAATSPS) has biased composition (low complexity). The segment covering 281-290 (SRKKDKRRSK) has biased composition (basic residues). Asn-291 and Asn-296 each carry an N-linked (GlcNAc...) asparagine glycan.

It belongs to the draxin family.

It is found in the secreted. Its function is as follows. Chemorepulsive axon guidance protein required for the development of spinal cord and forebrain commissures. Acts as a chemorepulsive guidance protein for commissural axons during development. Able to inhibit or repel neurite outgrowth from dorsal spinal cord. In Salmo salar (Atlantic salmon), this protein is Draxin-A (draxin-A).